The primary structure comprises 500 residues: NAD(P)H-quinone oxidoreductase chain 4, chloroplastic (500 aa).

A run of 14 helical transmembrane segments spans residues 4 to 24, 31 to 51, 87 to 107, 113 to 130, 134 to 154, 167 to 187, 208 to 228, 242 to 262, 272 to 292, 305 to 325, 330 to 350, 386 to 406, 416 to 436, and 462 to 482; these read FPWLTIIVFLPISAGSLLFFL, LIKWYTICICILELLLTTYAF, IGPILLTGFITTLATLAAWPV, LFHFLMLAMYSGQIGSFS, LLLFFIMWEFELIPVYLLLSM, FILYTAGGSVFLLIGVLGLGL, ALEIIFYIGFLIAFAVKSPII, HYSTCMLLAGILLKMGAYGLV, AHSIFSPWLIIVGTMQIIYAA, IAYSSVSHMGFIIIGIGSITD, GAILQIISHGFIGAALFFLAG, LALPGMSGFVAELIVFFGIIT, ILITFVMAIGMILTPIYSLSM, and LFVSISIFLPVIGIGIYPDFV.

It belongs to the complex I subunit 4 family.

The protein resides in the plastid. The protein localises to the chloroplast thylakoid membrane. The catalysed reaction is a plastoquinone + NADH + (n+1) H(+)(in) = a plastoquinol + NAD(+) + n H(+)(out). It carries out the reaction a plastoquinone + NADPH + (n+1) H(+)(in) = a plastoquinol + NADP(+) + n H(+)(out). The chain is NAD(P)H-quinone oxidoreductase chain 4, chloroplastic from Gossypium barbadense (Sea Island cotton).